The sequence spans 692 residues: Elongation factor G (692 aa).

A tr-type G domain is found at Asn8 to Thr283. Residues Ala17 to Thr24, Asp81 to His85, and Asn135 to Asp138 each bind GTP.

Belongs to the TRAFAC class translation factor GTPase superfamily. Classic translation factor GTPase family. EF-G/EF-2 subfamily.

It localises to the cytoplasm. Catalyzes the GTP-dependent ribosomal translocation step during translation elongation. During this step, the ribosome changes from the pre-translocational (PRE) to the post-translocational (POST) state as the newly formed A-site-bound peptidyl-tRNA and P-site-bound deacylated tRNA move to the P and E sites, respectively. Catalyzes the coordinated movement of the two tRNA molecules, the mRNA and conformational changes in the ribosome. The chain is Elongation factor G from Helicobacter acinonychis (strain Sheeba).